Here is a 71-residue protein sequence, read N- to C-terminus: Long neurotoxin 1 (71 aa).

Disulfide bonds link Cys3–Cys20, Cys14–Cys41, Cys26–Cys30, Cys45–Cys56, and Cys57–Cys62.

Belongs to the three-finger toxin family. Long-chain subfamily. Type II alpha-neurotoxin sub-subfamily. Expressed by the venom gland.

It localises to the secreted. Functionally, binds with high affinity to muscular (alpha-1/CHRNA1) and neuronal (alpha-7/CHRNA7) nicotinic acetylcholine receptor (nAChR) and hinders acetylcholine binding to the receptor, thereby impairing neuromuscular and neuronal transmission. In Naja annulata annulata (Banded water cobra), this protein is Long neurotoxin 1.